A 1872-amino-acid chain; its full sequence is E3 ubiquitin-protein ligase UBR2 (1872 aa).

The UBR-type zinc finger occupies T96–N172. K709 participates in a covalent cross-link: Glycyl lysine isopeptide (Lys-Gly) (interchain with G-Cter in ubiquitin). The tract at residues R1134–D1240 is interaction with UBC2. The interval N1203–N1227 is disordered. Over residues S1212–R1225 the composition is skewed to low complexity. Residues S1218 and S1222 each carry the phosphoserine modification. The RING-type; atypical zinc finger occupies D1241–S1362.

Belongs to the E3 ubiquitin-protein ligase UBR1-like family. As to quaternary structure, interacts with MUB1, RPN4 and UBC2.

The protein resides in the cytoplasm. The catalysed reaction is S-ubiquitinyl-[E2 ubiquitin-conjugating enzyme]-L-cysteine + [acceptor protein]-L-lysine = [E2 ubiquitin-conjugating enzyme]-L-cysteine + N(6)-ubiquitinyl-[acceptor protein]-L-lysine.. Its pathway is protein modification; protein ubiquitination. Its function is as follows. E3 ubiquitin-protein ligase which probably functions outside the N-end rule pathway, since it lacks the residues essential for the degradation of N-end rule substrates. Mediates RPN4 ubiquitination and subsequent degradation. The chain is E3 ubiquitin-protein ligase UBR2 (UBR2) from Saccharomyces cerevisiae (strain ATCC 204508 / S288c) (Baker's yeast).